The chain runs to 77 residues: UPF0270 protein Spro_4577 (77 aa).

It belongs to the UPF0270 family.

This Serratia proteamaculans (strain 568) protein is UPF0270 protein Spro_4577.